Reading from the N-terminus, the 456-residue chain is UPF0496 protein 4 (456 aa).

The helical transmembrane segment at 205 to 221 (SVTVFVCSIFVAVLSGS) threads the bilayer.

Belongs to the ROH1 family.

The protein localises to the membrane. This chain is UPF0496 protein 4, found in Oryza sativa subsp. indica (Rice).